The primary structure comprises 100 residues: Ubiquitin-related modifier 1 (100 aa).

At Gly100 the chain carries 1-thioglycine. Gly100 is covalently cross-linked (Glycyl lysine isopeptide (Gly-Lys) (interchain with K-? in acceptor proteins)).

It belongs to the URM1 family. Post-translationally, C-terminal thiocarboxylation occurs in 2 steps, it is first acyl-adenylated (-COAMP) via the hesA/moeB/thiF part of UBA4, then thiocarboxylated (-COSH) via the rhodanese domain of UBA4.

The protein localises to the cytoplasm. It functions in the pathway tRNA modification; 5-methoxycarbonylmethyl-2-thiouridine-tRNA biosynthesis. In terms of biological role, acts as a sulfur carrier required for 2-thiolation of mcm(5)S(2)U at tRNA wobble positions of cytosolic tRNA(Lys), tRNA(Glu) and tRNA(Gln). Serves as sulfur donor in tRNA 2-thiolation reaction by being thiocarboxylated (-COSH) at its C-terminus by the MOCS3 homolog UBA4. The sulfur is then transferred to tRNA to form 2-thiolation of mcm(5)S(2)U. Prior mcm(5) tRNA modification by the elongator complex is required for 2-thiolation. Also acts as a ubiquitin-like protein (UBL) that is covalently conjugated via an isopeptide bond to lysine residues of target proteins such as AHP1. The thiocarboxylated form serves as substrate for conjugation and oxidative stress specifically induces the formation of UBL-protein conjugates. This Eremothecium gossypii (strain ATCC 10895 / CBS 109.51 / FGSC 9923 / NRRL Y-1056) (Yeast) protein is Ubiquitin-related modifier 1.